The chain runs to 105 residues: Signal peptidase complex subunit 1 (105 aa).

The Cytoplasmic segment spans residues 1 to 32 (MDGMIAMLPAPLQKLSSHIDFQGQKVAERTYQ). A helical membrane pass occupies residues 33 to 53 (VILTIAGIIGFLVGFWTQQLS). Over 54–56 (YAM) the chain is Lumenal. The chain crosses the membrane as a helical span at residues 57 to 77 (FTVLGASAFTALIILPPWPFL). The Cytoplasmic segment spans residues 78–105 (FRKNPIVWHTPAEPQESGDKKKETKKTK).

Belongs to the SPCS1 family. In terms of assembly, component of the signal peptidase complex (SPC) composed of a catalytic subunit sec-11 and three accessory subunits spcs-1, spcs-2 and spcs-3. The complex induces a local thinning of the ER membrane which is used to measure the length of the signal peptide (SP) h-region of protein substrates. This ensures the selectivity of the complex towards h-regions shorter than 18-20 amino acids.

It localises to the endoplasmic reticulum membrane. Component of the signal peptidase complex (SPC) which catalyzes the cleavage of N-terminal signal sequences from nascent proteins as they are translocated into the lumen of the endoplasmic reticulum. Dispensable for SPC enzymatic activity. The sequence is that of Signal peptidase complex subunit 1 from Caenorhabditis elegans.